The primary structure comprises 491 residues: MSKVLPKRSDDYSLWYNELVKRADLAENAPVRGCMIIKPYGYSIWEKMQAVLDKMFKETGHSNAYFPLFIPKSYLSKEASHIDGFAKECAVVTHYRLKNDENGKGIIVDPEAKLDEELIVRPTSETVIWNTYKTWIQSHRDLPLLINQWANVVRWEMRTRLFLRTTEFLWQEGHTAHATKQEAIVETEQMMNVYATFAQNFMALPVHRGIKSANERFAGAEETYCIEALMQDGKALQAGTSHFLGQNFAKAFDVKFASKEGSLEYVWGTSWGVSTRLMGALIMAHSDDEGLVLPPLLAPIQVVIVPIFKTAEQLDLIEATLKPILAALKAKDISVKFDHSDKYSPGFKFAEYELKGVPLRVAIGARDIENGTVELARRDTKEKTTVPQEGLADTIEKLLQEIQENIYKKAFAYREANTFVADDYTTFKTMLDETPGFILAHWDGTPETEEKIKEETKATIRCIPLDVTSEPGICMVTGKPSAQRVLFARAY.

This sequence belongs to the class-II aminoacyl-tRNA synthetase family. ProS type 3 subfamily. Homodimer.

It localises to the cytoplasm. It catalyses the reaction tRNA(Pro) + L-proline + ATP = L-prolyl-tRNA(Pro) + AMP + diphosphate. Functionally, catalyzes the attachment of proline to tRNA(Pro) in a two-step reaction: proline is first activated by ATP to form Pro-AMP and then transferred to the acceptor end of tRNA(Pro). The protein is Proline--tRNA ligase of Cytophaga hutchinsonii (strain ATCC 33406 / DSM 1761 / CIP 103989 / NBRC 15051 / NCIMB 9469 / D465).